Consider the following 287-residue polypeptide: Cyclopropane mycolic acid synthase 1 (287 aa).

S-adenosyl-L-methionine is bound by residues 33-34, 68-76, 94-99, and 123-124; these read YS, LLDVGCGWG, TLSKNQ, and WE. Residue C269 is part of the active site.

The protein belongs to the CFA/CMAS family. As to quaternary structure, homodimer.

The protein localises to the cytoplasm. It catalyses the reaction a 1-acyl-2-(9Z)-enoyl-sn-glycero-3-phospholipid + S-adenosyl-L-methionine = a 1-acyl-2-(9-cyclopronane)-acyl-sn-glycero-3-phospholipid + S-adenosyl-L-homocysteine + H(+). Its pathway is lipid metabolism; mycolic acid biosynthesis. Functionally, catalyzes the conversion of a double bond to a cyclopropane ring at the distal position of an alpha mycolic acid via the transfer of a methylene group from S-adenosyl-L-methionine. Cyclopropanated mycolic acids are key factors participating in cell envelope permeability, host immunomodulation and persistence. This is Cyclopropane mycolic acid synthase 1 (cmaA1) from Mycobacterium tuberculosis (strain CDC 1551 / Oshkosh).